The sequence spans 147 residues: Nucleoside diphosphate kinase (147 aa).

ATP-binding residues include Lys9, Phe57, Arg85, Thr91, Arg102, and Asn112. Catalysis depends on His115, which acts as the Pros-phosphohistidine intermediate.

It belongs to the NDK family. Homotetramer. Requires Mg(2+) as cofactor.

Its subcellular location is the cytoplasm. It catalyses the reaction a 2'-deoxyribonucleoside 5'-diphosphate + ATP = a 2'-deoxyribonucleoside 5'-triphosphate + ADP. It carries out the reaction a ribonucleoside 5'-diphosphate + ATP = a ribonucleoside 5'-triphosphate + ADP. Its function is as follows. Major role in the synthesis of nucleoside triphosphates other than ATP. The ATP gamma phosphate is transferred to the NDP beta phosphate via a ping-pong mechanism, using a phosphorylated active-site intermediate. The chain is Nucleoside diphosphate kinase from Kosmotoga olearia (strain ATCC BAA-1733 / DSM 21960 / TBF 19.5.1).